We begin with the raw amino-acid sequence, 261 residues long: uncharacterized protein (261 aa).

Ile33, Asp78, and Asn105 together coordinate NADP(+). The active-site Proton donor is Ser157. Positions 172, 176, and 206 each coordinate NADP(+). The active-site Proton acceptor is the Tyr172. Lys176 serves as the catalytic Lowers pKa of active site Tyr.

Belongs to the short-chain dehydrogenases/reductases (SDR) family.

Its subcellular location is the cytoplasm. It is found in the nucleus. This is an uncharacterized protein from Schizosaccharomyces pombe (strain 972 / ATCC 24843) (Fission yeast).